We begin with the raw amino-acid sequence, 84 residues long: Beta-defensin 119 (84 aa).

The first 21 residues, 1–21 (MKLLYLFLAILLAIEEPVISG), serve as a signal peptide directing secretion. Disulfide bonds link cysteine 28-cysteine 55, cysteine 35-cysteine 49, and cysteine 39-cysteine 56.

Belongs to the beta-defensin family. In terms of tissue distribution, abundant expression in the male reproductive tract only. Abundant expressed in testis and the caput region of epididymis, but low in the corpus region.

Its subcellular location is the secreted. Its function is as follows. Has antibacterial activity. This is Beta-defensin 119 (DEFB119) from Homo sapiens (Human).